Consider the following 565-residue polypeptide: Adenine deaminase 1 (565 aa).

It belongs to the metallo-dependent hydrolases superfamily. Adenine deaminase family. The cofactor is Mn(2+).

The catalysed reaction is adenine + H2O + H(+) = hypoxanthine + NH4(+). The sequence is that of Adenine deaminase 1 from Rhizobium etli (strain ATCC 51251 / DSM 11541 / JCM 21823 / NBRC 15573 / CFN 42).